A 475-amino-acid chain; its full sequence is UDP-N-acetylmuramate--L-alanine ligase (475 aa).

An ATP-binding site is contributed by 125 to 131 (GTHGKTS).

This sequence belongs to the MurCDEF family.

The protein localises to the cytoplasm. It carries out the reaction UDP-N-acetyl-alpha-D-muramate + L-alanine + ATP = UDP-N-acetyl-alpha-D-muramoyl-L-alanine + ADP + phosphate + H(+). It participates in cell wall biogenesis; peptidoglycan biosynthesis. In terms of biological role, cell wall formation. This is UDP-N-acetylmuramate--L-alanine ligase from Mycolicibacterium gilvum (strain PYR-GCK) (Mycobacterium gilvum (strain PYR-GCK)).